A 265-amino-acid polypeptide reads, in one-letter code: tRNA pseudouridine synthase A (265 aa).

The Nucleophile role is filled by Asp-52. Tyr-105 contributes to the substrate binding site.

This sequence belongs to the tRNA pseudouridine synthase TruA family.

It catalyses the reaction uridine(38/39/40) in tRNA = pseudouridine(38/39/40) in tRNA. Formation of pseudouridine at positions 38, 39 and 40 in the anticodon stem and loop of transfer RNAs. This chain is tRNA pseudouridine synthase A, found in Archaeoglobus fulgidus (strain ATCC 49558 / DSM 4304 / JCM 9628 / NBRC 100126 / VC-16).